The primary structure comprises 210 residues: Calcium-activated potassium channel subunit beta-4 (210 aa).

Topologically, residues Met-1–Arg-19 are cytoplasmic. The chain crosses the membrane as a helical span at residues Leu-20–Leu-40. Over Ser-41–Glu-167 the chain is Extracellular. Asn-53 and Asn-90 each carry an N-linked (GlcNAc...) asparagine glycan. A helical membrane pass occupies residues Ile-168–Val-188. Topologically, residues Val-189 to Ser-210 are cytoplasmic.

It belongs to the KCNMB (TC 8.A.14.1) family. KCNMB4 subfamily. As to quaternary structure, interacts with KCNMA1 tetramer. There are probably 4 molecules of KCMNB4 per KCNMA1 tetramer. Interacts with FMR1 (via N-terminus). Post-translationally, phosphorylated. Phosphorylation modulates its effect on KCNMA1 activation kinetics. N-glycosylated. A highly glycosylated form is promoted by KCNMA1. Glycosylation, which is not required for the interaction with KCNMA1 and subcellular location, increases protection against charybdotoxin.

It is found in the membrane. Its function is as follows. Regulatory subunit of the calcium activated potassium KCNMA1 (maxiK) channel. Modulates the calcium sensitivity and gating kinetics of KCNMA1, thereby contributing to KCNMA1 channel diversity. Decreases the gating kinetics and calcium sensitivity of the KCNMA1 channel, but with fast deactivation kinetics. May decrease KCNMA1 channel openings at low calcium concentrations but increases channel openings at high calcium concentrations. Makes KCNMA1 channel resistant to 100 nM charybdotoxin (CTX) toxin concentrations. This is Calcium-activated potassium channel subunit beta-4 (Kcnmb4) from Rattus norvegicus (Rat).